The chain runs to 239 residues: Protein-S-isoprenylcysteine O-methyltransferase (239 aa).

Topologically, residues 1-23 (MHQDFQEDEHEYPDIRRNPLHEV) are cytoplasmic. Residues 24-44 (TMTSYILGILLGIFVGLFPQI) form a helical membrane-spanning segment. Residues 45-47 (RFK) lie on the Lumenal side of the membrane. The helical transmembrane segment at 48–68 (NFNLFIIALSLFHFLEYYITA) threads the bilayer. At 69–88 (KYNPLKVHSESFLLNNGKSY) the chain is on the cytoplasmic side. The chain crosses the membrane as a helical span at residues 89 to 109 (MAAHSFAILECLVESFLFPDL). Residue lysine 110 is a topological domain, lumenal. Residues 111–131 (IFSYSLATKLCTVLGCLLVIL) form a helical membrane-spanning segment. Residues 132–175 (GQYTRTIAMHTAGHSFSHIVKTKKESDHVLVKTGVYSWSRHPSY) are Cytoplasmic-facing. S-adenosyl-L-methionine-binding positions include 159–162 (HVLV), tyrosine 167, and 172–175 (HPSY). Positions 176 to 206 (LGFFWWAIGTQLLLLNPLSLVIFIFVLWKFF) form an intramembrane region, helical. Topologically, residues 207-239 (SDRIRVEEKYLIEFFSAEYIEYKNKVGVGIPFI) are cytoplasmic. Arginine 209 contributes to the substrate binding site. Glutamate 213 is an S-adenosyl-L-methionine binding site.

Belongs to the class VI-like SAM-binding methyltransferase superfamily. Isoprenylcysteine carboxyl methyltransferase family.

The protein localises to the endoplasmic reticulum membrane. The enzyme catalyses [protein]-C-terminal S-[(2E,6E)-farnesyl]-L-cysteine + S-adenosyl-L-methionine = [protein]-C-terminal S-[(2E,6E)-farnesyl]-L-cysteine methyl ester + S-adenosyl-L-homocysteine. Functionally, mediates C-terminal methylation of the isoprenylated C-terminal cysteine in A-factor mating pheromone and Ras proteins. Does not have a preference for the farnesyl or geranylgeranyl moieties in the model substrates N-acetyl-S-farnesyl-L-cysteine (AFC) and N-acetyl-S-geranylgeranyl-L-cysteine (AGGC) in vitro. The polypeptide is Protein-S-isoprenylcysteine O-methyltransferase (STE14) (Saccharomyces cerevisiae (strain ATCC 204508 / S288c) (Baker's yeast)).